The chain runs to 274 residues: MGLKRFKPTSPARRQMIIPDFSEITKKEPEKSLIAPLKKTGGRNSYGRVTVRFRGGGHKRKYRIIDFKRDKVGIPAKVVSIEYDPNRTARIALLVYADGEKRYILAPQDLNVGDMVMNGPDAEIKPGNALPLENIPVGTVIHNVEYIPGKGGQIARSAGTSCQLMAKEGKYALLRMPSGELRKVPVKCYATIGVVGNEDHKNEVDGKAGRVRWKGRKPHVRGVAMNPVDHPHGGGEGRGKGHHPQSPWGQLAKGYKTRRGKKASDKLIVRRRNG.

The tract at residues 222 to 274 (GVAMNPVDHPHGGGEGRGKGHHPQSPWGQLAKGYKTRRGKKASDKLIVRRRNG) is disordered. Residues 229-239 (DHPHGGGEGRG) show a composition bias toward basic and acidic residues.

This sequence belongs to the universal ribosomal protein uL2 family. As to quaternary structure, part of the 50S ribosomal subunit. Forms a bridge to the 30S subunit in the 70S ribosome.

One of the primary rRNA binding proteins. Required for association of the 30S and 50S subunits to form the 70S ribosome, for tRNA binding and peptide bond formation. It has been suggested to have peptidyltransferase activity; this is somewhat controversial. Makes several contacts with the 16S rRNA in the 70S ribosome. The chain is Large ribosomal subunit protein uL2 from Thermosipho melanesiensis (strain DSM 12029 / CIP 104789 / BI429).